The sequence spans 144 residues: Histone H2B.2, sperm (144 aa).

The segment at 1-51 (MPRSPAKTSPRKGSPRKGSPSRKASPKRGGKGAKRAGKGGRRRRVVKRRRR) is disordered. 5 consecutive short sequence motifs (SPKK motif) follow at residues 4 to 7 (SPAK), 9 to 12 (SPRK), 14 to 17 (SPRK), 19 to 22 (SPSR), and 25 to 28 (SPKR). A phosphoserine mark is found at S14, S19, and S25. Basic residues predominate over residues 24–51 (ASPKRGGKGAKRAGKGGRRRRVVKRRRR). S131 carries O-linked (GlcNAc) serine glycosylation. Residue K139 forms a Glycyl lysine isopeptide (Lys-Gly) (interchain with G-Cter in ubiquitin) linkage.

It belongs to the histone H2B family. As to quaternary structure, the nucleosome is a histone octamer containing two molecules each of H2A, H2B, H3 and H4 assembled in one H3-H4 heterotetramer and two H2A-H2B heterodimers. The octamer wraps approximately 147 bp of DNA. In terms of processing, monoubiquitination of Lys-139 gives a specific tag for epigenetic transcriptional activation and is also prerequisite for histone H3 'Lys-4' and 'Lys-79' methylation. Post-translationally, phosphorylated on SPKK motifs 3, 4 and 5; which may regulate DNA binding. Dephosphorylated during maturation of spermatids to mature sperm and rephosphorylated at fertilization.

The protein localises to the nucleus. It localises to the chromosome. Its function is as follows. Core component of nucleosome. Nucleosomes wrap and compact DNA into chromatin, limiting DNA accessibility to the cellular machineries which require DNA as a template. Histones thereby play a central role in transcription regulation, DNA repair, DNA replication and chromosomal stability. DNA accessibility is regulated via a complex set of post-translational modifications of histones, also called histone code, and nucleosome remodeling. The sequence is that of Histone H2B.2, sperm from Parechinus angulosus (Angulate sea urchin).